Reading from the N-terminus, the 260-residue chain is Tryptophan synthase alpha chain (260 aa).

Active-site proton acceptor residues include Glu-52 and Asp-63.

Belongs to the TrpA family. As to quaternary structure, tetramer of two alpha and two beta chains.

It catalyses the reaction (1S,2R)-1-C-(indol-3-yl)glycerol 3-phosphate + L-serine = D-glyceraldehyde 3-phosphate + L-tryptophan + H2O. The protein operates within amino-acid biosynthesis; L-tryptophan biosynthesis; L-tryptophan from chorismate: step 5/5. In terms of biological role, the alpha subunit is responsible for the aldol cleavage of indoleglycerol phosphate to indole and glyceraldehyde 3-phosphate. The chain is Tryptophan synthase alpha chain from Streptococcus thermophilus (strain ATCC BAA-250 / LMG 18311).